The chain runs to 384 residues: Deoxyguanosinetriphosphate triphosphohydrolase-like protein (384 aa).

The region spanning 62 to 198 (RLTHSLEVST…AALADDISYI (137 aa)) is the HD domain.

The protein belongs to the dGTPase family. Type 2 subfamily.

The sequence is that of Deoxyguanosinetriphosphate triphosphohydrolase-like protein from Rickettsia peacockii (strain Rustic).